The primary structure comprises 115 residues: NADH-ubiquinone oxidoreductase chain 3 (115 aa).

A run of 3 helical transmembrane segments spans residues 5 to 25, 55 to 75, and 86 to 106; these read LTLMTDVALALLLVMIAFWLP, FFLVAITFLLFDLEIALLLPL, and LMLTMALLLISILAAGLAYEW.

It belongs to the complex I subunit 3 family. Core subunit of respiratory chain NADH dehydrogenase (Complex I) which is composed of 45 different subunits. Interacts with TMEM186. Interacts with TMEM242.

Its subcellular location is the mitochondrion inner membrane. It carries out the reaction a ubiquinone + NADH + 5 H(+)(in) = a ubiquinol + NAD(+) + 4 H(+)(out). Its function is as follows. Core subunit of the mitochondrial membrane respiratory chain NADH dehydrogenase (Complex I) which catalyzes electron transfer from NADH through the respiratory chain, using ubiquinone as an electron acceptor. Essential for the catalytic activity of complex I. In Avahi cleesei (Cleese's woolly lemur), this protein is NADH-ubiquinone oxidoreductase chain 3.